The sequence spans 438 residues: Cell division cycle-associated 7-like protein (438 aa).

Positions isoleucine 9–valine 33 match the Integrase domain-binding motif 1 (IBM1) motif. Serine 21 is modified (phosphoserine). The PSIP1-binding stretch occupies residues alanine 55–aspartate 114. The Integrase domain-binding motif 2 (IBM2) motif lies at phenylalanine 62–glutamate 88. The segment at glutamate 72–serine 199 is disordered. Threonine 74 bears the Phosphothreonine mark. Residues threonine 74–threonine 85 show a composition bias toward acidic residues. The residue at position 76 (serine 76) is a Phosphoserine. Threonine 85 is modified (phosphothreonine). 7 positions are modified to phosphoserine: serine 100, serine 103, serine 113, serine 135, serine 136, serine 183, and serine 185. Residues serine 113–glutamate 123 show a composition bias toward acidic residues. Positions threonine 166 to serine 183 are enriched in basic and acidic residues. The interval alanine 201–leucine 223 is MYC-binding. Glycyl lysine isopeptide (Lys-Gly) (interchain with G-Cter in SUMO2) cross-links involve residues lysine 210 and lysine 213. Serine 249 carries the post-translational modification Phosphoserine.

As to quaternary structure, interacts with MYC. Interacts (via IBM motifs) with PSIP1 (via IBD domain); phosphorylation increases its affinity for PSIP1. Post-translationally, phosphorylation increases its interaction with PSIP1.

The protein resides in the cytoplasm. The protein localises to the nucleus. In terms of biological role, plays a role in transcriptional regulation as a repressor that inhibits monoamine oxidase A (MAOA) activity and gene expression by binding to the promoter. Plays an important oncogenic role in mediating the full transforming effect of MYC in medulloblastoma cells. Involved in apoptotic signaling pathways; May act downstream of P38-kinase and BCL-2, but upstream of CASP3/caspase-3 as well as CCND1/cyclin D1 and E2F1. This Rattus norvegicus (Rat) protein is Cell division cycle-associated 7-like protein (Cdca7l).